A 382-amino-acid polypeptide reads, in one-letter code: Carbamoyl phosphate synthase small chain (382 aa).

Positions 1–189 (MIKSALLVLE…GLPEAKSEDD (189 aa)) are CPSase. The L-glutamine site is built by S47, G241, and G243. In terms of domain architecture, Glutamine amidotransferase type-1 spans 193 to 380 (HVVAYDFGAK…IELIEQYRQS (188 aa)). C269 (nucleophile) is an active-site residue. Positions 270, 273, 311, 313, and 314 each coordinate L-glutamine. Residues H353 and E355 contribute to the active site.

This sequence belongs to the CarA family. In terms of assembly, composed of two chains; the small (or glutamine) chain promotes the hydrolysis of glutamine to ammonia, which is used by the large (or ammonia) chain to synthesize carbamoyl phosphate. Tetramer of heterodimers (alpha,beta)4.

It carries out the reaction hydrogencarbonate + L-glutamine + 2 ATP + H2O = carbamoyl phosphate + L-glutamate + 2 ADP + phosphate + 2 H(+). The enzyme catalyses L-glutamine + H2O = L-glutamate + NH4(+). It participates in amino-acid biosynthesis; L-arginine biosynthesis; carbamoyl phosphate from bicarbonate: step 1/1. It functions in the pathway pyrimidine metabolism; UMP biosynthesis via de novo pathway; (S)-dihydroorotate from bicarbonate: step 1/3. Functionally, small subunit of the glutamine-dependent carbamoyl phosphate synthetase (CPSase). CPSase catalyzes the formation of carbamoyl phosphate from the ammonia moiety of glutamine, carbonate, and phosphate donated by ATP, constituting the first step of 2 biosynthetic pathways, one leading to arginine and/or urea and the other to pyrimidine nucleotides. The small subunit (glutamine amidotransferase) binds and cleaves glutamine to supply the large subunit with the substrate ammonia. In Salmonella typhimurium (strain LT2 / SGSC1412 / ATCC 700720), this protein is Carbamoyl phosphate synthase small chain.